A 75-amino-acid polypeptide reads, in one-letter code: Small ribosomal subunit protein bS18 (75 aa).

It belongs to the bacterial ribosomal protein bS18 family. Part of the 30S ribosomal subunit. Forms a tight heterodimer with protein bS6.

Its function is as follows. Binds as a heterodimer with protein bS6 to the central domain of the 16S rRNA, where it helps stabilize the platform of the 30S subunit. This chain is Small ribosomal subunit protein bS18, found in Cereibacter sphaeroides (strain KD131 / KCTC 12085) (Rhodobacter sphaeroides).